The sequence spans 98 residues: NADH-ubiquinone oxidoreductase chain 4L (98 aa).

The next 3 membrane-spanning stretches (helical) occupy residues 1–21 (MPLIYMNITLAFAISLLGMLI), 29–49 (SLLCLEGMMLSLFIMSTLMAL), and 61–81 (VVLLVFAACEAAVGLALLVSI).

Belongs to the complex I subunit 4L family. In terms of assembly, core subunit of respiratory chain NADH dehydrogenase (Complex I) which is composed of 45 different subunits.

The protein resides in the mitochondrion inner membrane. It catalyses the reaction a ubiquinone + NADH + 5 H(+)(in) = a ubiquinol + NAD(+) + 4 H(+)(out). In terms of biological role, core subunit of the mitochondrial membrane respiratory chain NADH dehydrogenase (Complex I) which catalyzes electron transfer from NADH through the respiratory chain, using ubiquinone as an electron acceptor. Part of the enzyme membrane arm which is embedded in the lipid bilayer and involved in proton translocation. The protein is NADH-ubiquinone oxidoreductase chain 4L (MT-ND4L) of Hylobates lar (Lar gibbon).